Reading from the N-terminus, the 236-residue chain is Transcription repressor MYB6 (236 aa).

2 HTH myb-type domains span residues 9 to 61 and 62 to 116; these read KAHT…INYL and RPDL…KRKL. 2 DNA-binding regions (H-T-H motif) span residues 37-61 and 89-112; these read WRSLPKSAGLLRCGKSCRLRWINYL and WSLIAGRLPGRTDNEIKNYWNTHI. Positions 159-181 are disordered; the sequence is PKTENSSDNGASTSGTTTDEDLR. The span at 162-175 shows a compositional bias: polar residues; it reads ENSSDNGASTSGTT.

Interacts with BHLH012/MYC1 and BHLH042/TT8. As to expression, expressed in roots, stems, flower buds, and siliques.

Its subcellular location is the nucleus. The chain is Transcription repressor MYB6 (MYB6) from Arabidopsis thaliana (Mouse-ear cress).